The sequence spans 458 residues: Siroheme synthase (458 aa).

The tract at residues 1 to 203 (MDYLPLFFDL…GNLAAAEQLI (203 aa)) is precorrin-2 dehydrogenase /sirohydrochlorin ferrochelatase. Residues 22–23 (TI) and 43–44 (PK) contribute to the NAD(+) site. Residue S128 is modified to Phosphoserine. The uroporphyrinogen-III C-methyltransferase stretch occupies residues 216-458 (GEVYLVGAGP…RCHEKLNWYK (243 aa)). Residue P225 coordinates S-adenosyl-L-methionine. The Proton acceptor role is filled by D248. K270 acts as the Proton donor in catalysis. Residues 301 to 303 (GGD), I306, 331 to 332 (TA), M383, and G412 contribute to the S-adenosyl-L-methionine site.

In the N-terminal section; belongs to the precorrin-2 dehydrogenase / sirohydrochlorin ferrochelatase family. It in the C-terminal section; belongs to the precorrin methyltransferase family.

It carries out the reaction uroporphyrinogen III + 2 S-adenosyl-L-methionine = precorrin-2 + 2 S-adenosyl-L-homocysteine + H(+). It catalyses the reaction precorrin-2 + NAD(+) = sirohydrochlorin + NADH + 2 H(+). The catalysed reaction is siroheme + 2 H(+) = sirohydrochlorin + Fe(2+). It participates in cofactor biosynthesis; adenosylcobalamin biosynthesis; precorrin-2 from uroporphyrinogen III: step 1/1. It functions in the pathway cofactor biosynthesis; adenosylcobalamin biosynthesis; sirohydrochlorin from precorrin-2: step 1/1. Its pathway is porphyrin-containing compound metabolism; siroheme biosynthesis; precorrin-2 from uroporphyrinogen III: step 1/1. The protein operates within porphyrin-containing compound metabolism; siroheme biosynthesis; siroheme from sirohydrochlorin: step 1/1. It participates in porphyrin-containing compound metabolism; siroheme biosynthesis; sirohydrochlorin from precorrin-2: step 1/1. Its function is as follows. Multifunctional enzyme that catalyzes the SAM-dependent methylations of uroporphyrinogen III at position C-2 and C-7 to form precorrin-2 via precorrin-1. Then it catalyzes the NAD-dependent ring dehydrogenation of precorrin-2 to yield sirohydrochlorin. Finally, it catalyzes the ferrochelation of sirohydrochlorin to yield siroheme. The protein is Siroheme synthase of Saccharophagus degradans (strain 2-40 / ATCC 43961 / DSM 17024).